A 236-amino-acid polypeptide reads, in one-letter code: uncharacterized protein (236 aa).

An N-terminal signal peptide occupies residues 1-26 (MTNTWNRLALLIFAVLSLLVAGELQA).

Belongs to the periplasmic pilus chaperone family.

The protein localises to the periplasm. Part of the elfADCG-ycbUVF fimbrial operon, which promotes adhesion of bacteria to different abiotic surfaces. Could be required for the biogenesis of fimbriae. This is an uncharacterized protein from Escherichia coli (strain K12).